A 207-amino-acid polypeptide reads, in one-letter code: 2,3-bisphosphoglycerate-dependent phosphoglycerate mutase (207 aa).

Substrate is bound by residues 10–17 (RHGQSEWN), 23–24 (TG), R62, 89–92 (ERDY), K100, 116–117 (RR), and 160–161 (GN). Residue H11 is the Tele-phosphohistidine intermediate of the active site. E89 (proton donor/acceptor) is an active-site residue.

This sequence belongs to the phosphoglycerate mutase family. BPG-dependent PGAM subfamily. In terms of assembly, homodimer.

It carries out the reaction (2R)-2-phosphoglycerate = (2R)-3-phosphoglycerate. It functions in the pathway carbohydrate degradation; glycolysis; pyruvate from D-glyceraldehyde 3-phosphate: step 3/5. Functionally, catalyzes the interconversion of 2-phosphoglycerate and 3-phosphoglycerate. This chain is 2,3-bisphosphoglycerate-dependent phosphoglycerate mutase, found in Bradyrhizobium sp. (strain BTAi1 / ATCC BAA-1182).